The chain runs to 458 residues: Retinoic acid receptor alpha-B (458 aa).

The tract at residues 1-79 (MYESVDVVGL…PPSPPPPPRV (79 aa)) is modulating. The segment at 48 to 75 (HWSGSNHSVETQSTSSEEIVPSPPSPPP) is disordered. The segment covering 49 to 64 (WSGSNHSVETQSTSSE) has biased composition (polar residues). The nuclear receptor DNA-binding region spans 80 to 155 (YKPCFVCQDK…VGMSKESVRN (76 aa)). NR C4-type zinc fingers lie at residues 83-103 (CFVC…CEGC) and 119-138 (CHRE…CQYC). The tract at residues 156–177 (DRNKRKKDDKKQECLENYVLSP) is hinge. The region spanning 178-412 (DTEKMIEQVR…PLIQEMLENS (235 aa)) is the NR LBD domain. Residues 403 to 411 (PLIQEMLEN) carry the 9aaTAD motif. A disordered region spans residues 411 to 458 (NSEGLEGGGSKGAGGGGGGGGGKGAPPGSCSPSLSPSSAHSSPSAHSP). The segment covering 415–435 (LEGGGSKGAGGGGGGGGGKGA) has biased composition (gly residues). Positions 436 to 458 (PPGSCSPSLSPSSAHSSPSAHSP) are enriched in low complexity.

Belongs to the nuclear hormone receptor family. NR1 subfamily. In terms of assembly, heterodimer; with an rxr molecule. Binds DNA preferentially as a rar/rxr heterodimer. In terms of tissue distribution, in the embryo, zygotic expression largely overlaps that of raraa, with high levels in hindbrain, lateral plate mesoderm (LPM) and tail bud, but in later stages rarab is expressed more broadly in the brain, pectoral fin bud and pharyngeal arches.

It localises to the nucleus. Its function is as follows. Receptor for retinoic acid. Retinoic acid receptors bind as heterodimers to their target response elements in response to their ligands, all-trans or 9-cis retinoic acid, and regulate gene expression in various biological processes. The rar/rxr heterodimers bind to the retinoic acid response elements (RARE) composed of tandem 5'-AGGTCA-3' sites known as DR1-DR5. Required for hindbrain development and, in lateral plate mesoderm, for specification of the pectoral fins. The polypeptide is Retinoic acid receptor alpha-B (Danio rerio (Zebrafish)).